The sequence spans 298 residues: Tryptophan 2,3-dioxygenase (298 aa).

Substrate-binding positions include 51-55 (FIIQH), tyrosine 113, and arginine 117. Histidine 240 contacts heme. Threonine 254 provides a ligand contact to substrate.

The protein belongs to the tryptophan 2,3-dioxygenase family. In terms of assembly, homotetramer. It depends on heme as a cofactor.

It carries out the reaction L-tryptophan + O2 = N-formyl-L-kynurenine. Its pathway is amino-acid degradation; L-tryptophan degradation via kynurenine pathway; L-kynurenine from L-tryptophan: step 1/2. Its function is as follows. Heme-dependent dioxygenase that catalyzes the oxidative cleavage of the L-tryptophan (L-Trp) pyrrole ring and converts L-tryptophan to N-formyl-L-kynurenine. Catalyzes the oxidative cleavage of the indole moiety. This chain is Tryptophan 2,3-dioxygenase, found in Xanthomonas campestris pv. campestris (strain 8004).